Here is a 146-residue protein sequence, read N- to C-terminus: Hemoglobin subunit beta (146 aa).

Val1 is modified (N-acetylvaline). A Globin domain is found at 2-146 (HLTDAEKALV…VATALAHKYH (145 aa)). Phosphothreonine is present on Thr12. At Ser44 the chain carries Phosphoserine. Lys59 carries the N6-acetyllysine modification. His63 contacts heme b. Lys82 carries the N6-acetyllysine modification. His92 is a binding site for heme b. At Cys93 the chain carries S-nitrosocysteine. At Lys144 the chain carries N6-acetyllysine.

This sequence belongs to the globin family. In terms of assembly, heterotetramer of two alpha chains and two beta chains. Red blood cells.

Functionally, involved in oxygen transport from the lung to the various peripheral tissues. This chain is Hemoglobin subunit beta, found in Peromyscus californicus (California mouse).